A 798-amino-acid polypeptide reads, in one-letter code: Type 2 DNA topoisomerase 6 subunit B (798 aa).

ATP is bound by residues N60, D91, S112–R113, and G122–S129. The span at E221–E233 shows a compositional bias: basic and acidic residues. The interval E221–H245 is disordered. K629 lines the ATP pocket.

This sequence belongs to the TOP6B family. As to quaternary structure, homodimer. Heterotetramer of two Top6A and two Top6B chains.

It catalyses the reaction ATP-dependent breakage, passage and rejoining of double-stranded DNA.. Relaxes both positive and negative superturns and exhibits a strong decatenase activity. The chain is Type 2 DNA topoisomerase 6 subunit B from Natronomonas pharaonis (strain ATCC 35678 / DSM 2160 / CIP 103997 / JCM 8858 / NBRC 14720 / NCIMB 2260 / Gabara) (Halobacterium pharaonis).